Here is a 668-residue protein sequence, read N- to C-terminus: Major S-layer protein (668 aa).

A signal peptide spans 1 to 24 (MKRFAAVTLAALMLLTVFASAASA). 10 N-linked (GlcNAc...) asparagine glycosylation sites follow: N36, N65, N111, N265, N583, N596, N602, N608, N617, and N635. Residues 584-650 (ETTSITKPDE…ESNGSPGFGV (67 aa)) form a disordered region. A compositionally biased stretch (polar residues) spans 596–611 (NETVSDNETMPDNTSS). Residues 631-641 (EPTDNETEPDE) are compositionally biased toward acidic residues. The helical transmembrane segment at 644 to 664 (GSPGFGVVLGLAGLLGVVYLV) threads the bilayer.

The protein belongs to the Methanosarcinales S-layer protein family. Glycosylated.

It localises to the secreted. It is found in the cell wall. The protein localises to the S-layer. Its subcellular location is the cell membrane. S-layer protein. The S-layer is a paracrystalline mono-layered assembly of proteins which coat the surface of the cell. The sequence is that of Major S-layer protein from Methanosarcina barkeri (strain Fusaro / DSM 804).